A 276-amino-acid chain; its full sequence is Lyso-ornithine lipid O-acyltransferase (276 aa).

The helical transmembrane segment at 25–47 (LALRGGAMALVLMAGLTLHLAVR) threads the bilayer.

This sequence belongs to the 1-acyl-sn-glycerol-3-phosphate acyltransferase family. OlsA subfamily.

Its subcellular location is the membrane. It carries out the reaction a lyso-ornithine lipid + a fatty acyl-[ACP] = an N(2)-[(3R)-3-(acyloxy)acyl]-L-ornithine lipid + holo-[ACP]. The catalysed reaction is a fatty acyl-[ACP] + a 1-acyl-sn-glycero-3-phosphate = a 1,2-diacyl-sn-glycero-3-phosphate + holo-[ACP]. Its pathway is lipid metabolism. It functions in the pathway phospholipid metabolism. Catalyzes the second step in the formation of ornithine lipids, which are phosphorus-free membrane lipids. Uses acyl-acyl carrier protein (acyl-AcpP) as an acyl donor and converts lyso-ornithine lipid (LOL) into ornithine lipid (OL). It can also act as an alternate acyl-sn-glycerol-3-phosphate acyltransferase (AGPAT) to ensure glycerophospholipid production. This is Lyso-ornithine lipid O-acyltransferase from Rhodobacter capsulatus (strain ATCC BAA-309 / NBRC 16581 / SB1003).